Here is a 227-residue protein sequence, read N- to C-terminus: MSKITKLFKSSGGSGSSSKNRKGPSAQEALFKLRETEEMLTKKQEYLEKKIELELATAKKHGTKNKRAALQALKKKKRLEKQLAQIDGTLSTIEFQREALENSHTNTEVLKNMGYAAKAMKAAHENMDLEKIDDLMQDIHEQQDVAQEISDAISRPVGFGDEFDEDELLEELEELEQEDLNSQMANVNLPSVPSSKLPSTKLPSRPASSRKKVEDDDDMQMLAAWAT.

The tract at residues 1–27 (MSKITKLFKSSGGSGSSSKNRKGPSAQ) is disordered. Coiled coils occupy residues 32–94 (KLRE…STIE) and 129–187 (LEKI…MANV). A disordered region spans residues 178–227 (EDLNSQMANVNLPSVPSSKLPSTKLPSRPASSRKKVEDDDDMQMLAAWAT). Positions 189–206 (LPSVPSSKLPSTKLPSRP) are enriched in low complexity.

This sequence belongs to the SNF7 family. In terms of assembly, probable core component of the endosomal sorting required for transport complex III (ESCRT-III). ESCRT-III components are thought to multimerize to form a flat lattice on the perimeter membrane of the endosome.

It localises to the cytoplasm. The protein localises to the cytosol. It is found in the late endosome membrane. Functionally, probable core component of the endosomal sorting required for transport complex III (ESCRT-III) which is involved in multivesicular bodies (MVBs) formation and sorting of endosomal cargo proteins into MVBs. MVBs contain intraluminal vesicles (ILVs) that are generated by invagination and scission from the limiting membrane of the endosome and mostly are delivered to lysosomes enabling degradation of membrane proteins, such as stimulated growth factor receptors, lysosomal enzymes and lipids. Key component of the cytokinesis checkpoint, a process required to delay abscission to prevent both premature resolution of intercellular chromosome bridges and accumulation of DNA damage. The polypeptide is Charged multivesicular body protein 4c (chmp4c) (Xenopus laevis (African clawed frog)).